A 601-amino-acid chain; its full sequence is Sestrin homolog (601 aa).

Residues 1 to 11 (MISMGMTSKGQ) show a composition bias toward polar residues. Residues 1-58 (MISMGMTSKGQNVDGAPAGNSSSEWIISSSSSPFQANKRYSLDPPFGSDYSPPASPQN) form a disordered region. N-linked (GlcNAc...) asparagine glycosylation is present at N20. Over residues 21-32 (SSSEWIISSSSS) the composition is skewed to low complexity. N-linked (GlcNAc...) asparagine glycans are attached at residues N322 and N330. Positions 355–425 (RRSQQQDDDD…DSSSSTLSQS (71 aa)) are disordered. Over residues 368–379 (LHDRQQDFHNAG) the composition is skewed to basic and acidic residues. Positions 380–425 (DDSQSSNNNTTTTTTTTTTTTTTTNTNTTSNSAGGGDSSSSTLSQS) are enriched in low complexity. N-linked (GlcNAc...) asparagine glycans are attached at residues N387, N388, N406, N438, and N499.

This sequence belongs to the sestrin family.

The protein localises to the nucleus. It is found in the cytoplasm. May function as a negative feedback regulator of TOR function. The sequence is that of Sestrin homolog from Dictyostelium discoideum (Social amoeba).